The sequence spans 157 residues: Class 10 plant pathogenesis-related protein 2E (157 aa).

Aspartate 8 provides a ligand contact to trans-zeatin. Ca(2+) is bound by residues proline 32, valine 35, and isoleucine 38. Residues glutamate 60, histidine 69, tyrosine 81, and tyrosine 83 each contribute to the trans-zeatin site.

Belongs to the BetVI family.

The protein localises to the cytoplasm. Its subcellular location is the cytosol. In terms of biological role, class II ribonuclease (RNase). Binds to cytokinins. Interacts with melatonin. This chain is Class 10 plant pathogenesis-related protein 2E, found in Lupinus luteus (European yellow lupine).